We begin with the raw amino-acid sequence, 450 residues long: MNEFQPVNRRQFLFTLGATAASAILLKGCGNPPSSSGGGTSSTTQPTAAGASDLEVKTIKLGYIPIFEAAPLIIGREKGFFAKYGLDVEVSKQASWAAARDNVILGSAGGGIDGGQWQMPMPALLTEGAISNGQKVPMYVLACLSTQGNGIAVSNQLKAQNLGLKLAPNRDFILNYPQTSGRKFKASYTFPNANQDFWIRYWFAAGGIDPDKDIELLTVPSAETLQNMRNGTIDCFSTGDPWPSRIAKDDIGYQAALTGQMWPYHPEEFLALRADWVDKHPKATLALLMGLMEAQQWCDQKANRAEMAKILSGRNFFNVPVSILQPILEGQIKVGADGKDLNNFDAGPLFWKSPRGSVSYPYKGLTLWFLVESIRWGFNKQVLPDIAAAQKLNDRVTREDLWQEAAKKLGVPAADIPTGSTRGTETFFDGITYNPDSPQAYLQSLKIKRA.

The tat-type signal signal peptide spans 1-36 (MNEFQPVNRRQFLFTLGATAASAILLKGCGNPPSSS).

This sequence belongs to the CmpA/NrtA family. In terms of assembly, the complex is composed of two ATP-binding proteins (CmpC and CmpD), a transmembrane protein (CmpB) and a solute-binding protein (CmpA). In terms of processing, predicted to be exported by the Tat system. The position of the signal peptide cleavage has not been experimentally proven. Post-translationally, the N-terminus is blocked.

The protein resides in the cell inner membrane. Part of the ABC transporter complex CmpABCD involved in bicarbonate transport. Binds bicarbonate with high affinity. This is Bicarbonate-binding protein CmpA (cmpA) from Synechococcus elongatus (strain ATCC 33912 / PCC 7942 / FACHB-805) (Anacystis nidulans R2).